Here is a 188-residue protein sequence, read N- to C-terminus: Elongation factor P (188 aa).

This sequence belongs to the elongation factor P family.

The protein resides in the cytoplasm. It participates in protein biosynthesis; polypeptide chain elongation. In terms of biological role, involved in peptide bond synthesis. Stimulates efficient translation and peptide-bond synthesis on native or reconstituted 70S ribosomes in vitro. Probably functions indirectly by altering the affinity of the ribosome for aminoacyl-tRNA, thus increasing their reactivity as acceptors for peptidyl transferase. The chain is Elongation factor P from Bacteroides fragilis (strain ATCC 25285 / DSM 2151 / CCUG 4856 / JCM 11019 / LMG 10263 / NCTC 9343 / Onslow / VPI 2553 / EN-2).